The sequence spans 402 residues: D-galactonate dehydratase family member EGBG_02030 (402 aa).

Asp-207 lines the Mg(2+) pocket. His-209 provides a ligand contact to D-arabinonate. Mg(2+) is bound by residues Glu-233 and Glu-259. Positions 259, 280, 309, and 336 each coordinate D-arabinonate.

Belongs to the mandelate racemase/muconate lactonizing enzyme family. GalD subfamily.

Its function is as follows. Has no detectable activity with D-mannonate and with a panel of 70 other acid sugars (in vitro), in spite of the conservation of the residues that are expected to be important for catalytic activity and cofactor binding. May have evolved a divergent function. The protein is D-galactonate dehydratase family member EGBG_02030 of Enterococcus gallinarum (strain EG2).